A 274-amino-acid chain; its full sequence is MQLLNNWYSLLLTEVAAYFTSTTLFVSILKNAPSLSWLMKYGGHDNFGLKPPLIATKLEVPKRWFWHFYAFISLLNPLFTFFILNTNFPIPIFKNIKEDLMYSKKLQVLLLIYEIHTLRRLYENLRFRKSGSKMLAGHYLLGYLFYTHTFLALLLCGRRSYENTMSSMQFVGLGIYAIGSIWQNASHEHLIAQKNHSQYLVLKKGCFKWITGPHYLGEIIVYTGIALIAQHWLIWLVLGWVLCNMVAISSSYACTVKNKEQSLDFRWTLIPFLY.

5 helical membrane passes run 9-29, 64-84, 135-155, 165-185, and 219-239; these read SLLLTEVAAYFTSTTLFVSIL, WFWHFYAFISLLNPLFTFFIL, LAGHYLLGYLFYTHTFLALLL, MSSMQFVGLGIYAIGSIWQNA, and IIVYTGIALIAQHWLIWLVLG.

This sequence belongs to the steroid 5-alpha reductase family.

Its subcellular location is the endoplasmic reticulum membrane. This is an uncharacterized protein from Schizosaccharomyces pombe (strain 972 / ATCC 24843) (Fission yeast).